The chain runs to 248 residues: tRNA (guanine-N(1)-)-methyltransferase (248 aa).

S-adenosyl-L-methionine contacts are provided by residues glycine 113 and 133–138 (IGDYVL).

It belongs to the RNA methyltransferase TrmD family. In terms of assembly, homodimer.

The protein resides in the cytoplasm. It carries out the reaction guanosine(37) in tRNA + S-adenosyl-L-methionine = N(1)-methylguanosine(37) in tRNA + S-adenosyl-L-homocysteine + H(+). In terms of biological role, specifically methylates guanosine-37 in various tRNAs. The sequence is that of tRNA (guanine-N(1)-)-methyltransferase from Shewanella piezotolerans (strain WP3 / JCM 13877).